Reading from the N-terminus, the 910-residue chain is 2-oxoglutarate dehydrogenase E1 component (910 aa).

This sequence belongs to the alpha-ketoglutarate dehydrogenase family. As to quaternary structure, homodimer. Part of the 2-oxoglutarate dehydrogenase (OGDH) complex composed of E1 (2-oxoglutarate dehydrogenase), E2 (dihydrolipoamide succinyltransferase) and E3 (dihydrolipoamide dehydrogenase); the complex contains multiple copies of the three enzymatic components (E1, E2 and E3). Thiamine diphosphate serves as cofactor.

It carries out the reaction N(6)-[(R)-lipoyl]-L-lysyl-[protein] + 2-oxoglutarate + H(+) = N(6)-[(R)-S(8)-succinyldihydrolipoyl]-L-lysyl-[protein] + CO2. In terms of biological role, E1 component of the 2-oxoglutarate dehydrogenase (OGDH) complex which catalyzes the decarboxylation of 2-oxoglutarate, the first step in the conversion of 2-oxoglutarate to succinyl-CoA and CO(2). This is 2-oxoglutarate dehydrogenase E1 component from Staphylococcus aureus (strain N315).